The following is a 353-amino-acid chain: Photosystem II protein D1 (353 aa).

Thr-2 is modified (N-acetylthreonine). Thr-2 carries the phosphothreonine modification. A run of 3 helical transmembrane segments spans residues 29 to 46 (YIGW…TATS), 118 to 133 (HFLL…EWEL), and 142 to 156 (WIAV…AATA). Residue His-118 participates in chlorophyll a binding. Tyr-126 serves as a coordination point for pheophytin a. [CaMn4O5] cluster-binding residues include Asp-170 and Glu-189. The helical transmembrane segment at 197 to 218 (FHMLGVAGVFGGSLFSAMHGSL) threads the bilayer. A chlorophyll a-binding site is contributed by His-198. Residues His-215 and 264-265 (SF) each bind a quinone. Fe cation is bound at residue His-215. His-272 is a binding site for Fe cation. Residues 274 to 288 (FLAAWPVVGIWFTAL) traverse the membrane as a helical segment. The [CaMn4O5] cluster site is built by His-332, Glu-333, Asp-342, and Ala-344. Residues 345–353 (AVEAPSING) constitute a propeptide that is removed on maturation.

The protein belongs to the reaction center PufL/M/PsbA/D family. PSII is composed of 1 copy each of membrane proteins PsbA, PsbB, PsbC, PsbD, PsbE, PsbF, PsbH, PsbI, PsbJ, PsbK, PsbL, PsbM, PsbT, PsbX, PsbY, PsbZ, Psb30/Ycf12, at least 3 peripheral proteins of the oxygen-evolving complex and a large number of cofactors. It forms dimeric complexes. The cofactor is The D1/D2 heterodimer binds P680, chlorophylls that are the primary electron donor of PSII, and subsequent electron acceptors. It shares a non-heme iron and each subunit binds pheophytin, quinone, additional chlorophylls, carotenoids and lipids. D1 provides most of the ligands for the Mn4-Ca-O5 cluster of the oxygen-evolving complex (OEC). There is also a Cl(-1) ion associated with D1 and D2, which is required for oxygen evolution. The PSII complex binds additional chlorophylls, carotenoids and specific lipids.. Post-translationally, tyr-161 forms a radical intermediate that is referred to as redox-active TyrZ, YZ or Y-Z. C-terminally processed by CTPA; processing is essential to allow assembly of the oxygen-evolving complex and thus photosynthetic growth.

The protein localises to the plastid. It localises to the chloroplast thylakoid membrane. The catalysed reaction is 2 a plastoquinone + 4 hnu + 2 H2O = 2 a plastoquinol + O2. Its function is as follows. Photosystem II (PSII) is a light-driven water:plastoquinone oxidoreductase that uses light energy to abstract electrons from H(2)O, generating O(2) and a proton gradient subsequently used for ATP formation. It consists of a core antenna complex that captures photons, and an electron transfer chain that converts photonic excitation into a charge separation. The D1/D2 (PsbA/PsbD) reaction center heterodimer binds P680, the primary electron donor of PSII as well as several subsequent electron acceptors. The sequence is that of Photosystem II protein D1 from Illicium oligandrum (Star anise).